The sequence spans 344 residues: Chalcone synthase A (344 aa).

C167 is a catalytic residue.

This sequence belongs to the thiolase-like superfamily. Chalcone/stilbene synthases family.

It catalyses the reaction (E)-4-coumaroyl-CoA + 3 malonyl-CoA + 3 H(+) = 2',4,4',6'-tetrahydroxychalcone + 3 CO2 + 4 CoA. Its pathway is secondary metabolite biosynthesis; flavonoid biosynthesis. In terms of biological role, the primary product of this enzyme is 4,2',4',6'-tetrahydroxychalcone (also termed naringenin-chalcone or chalcone) which can under specific conditions spontaneously isomerize into naringenin. The polypeptide is Chalcone synthase A (CHSA) (Ipomoea nil (Japanese morning glory)).